The chain runs to 143 residues: Transcriptional regulator MraZ (143 aa).

2 consecutive SpoVT-AbrB domains span residues 5–47 and 76–119; these read EYQH…PKEE and AGEC…SRER.

It belongs to the MraZ family. In terms of assembly, forms oligomers.

The protein resides in the cytoplasm. It localises to the nucleoid. This Heliobacterium modesticaldum (strain ATCC 51547 / Ice1) protein is Transcriptional regulator MraZ.